A 791-amino-acid chain; its full sequence is DUF1769 family protein duc1 (791 aa).

The segment at Ala-158–Pro-189 is disordered. The segment covering Ser-174 to Ser-184 has biased composition (low complexity). Residues Arg-373–Glu-379 carry the FFAT motif. The residue at position 374 (Tyr-374) is a Phosphotyrosine. Thr-376 carries the post-translational modification Phosphothreonine. Disordered stretches follow at residues Gln-381–Arg-505, Asn-542–Lys-606, and Pro-630–Pro-658. Residues Leu-415–Ser-426 are compositionally biased toward basic residues. Over residues Ser-444–Ala-453 the composition is skewed to low complexity. Basic and acidic residues predominate over residues Lys-455 to Ile-473. A phosphoserine mark is found at Ser-477 and Ser-493. Over residues Ser-477–Lys-487 the composition is skewed to basic residues. A compositionally biased stretch (polar residues) spans Glu-555–Pro-564. Ser-574 carries the post-translational modification Phosphoserine. A compositionally biased stretch (basic and acidic residues) spans Ser-574–Asp-586. Over residues Glu-587–Gln-601 the composition is skewed to polar residues.

This sequence belongs to the UPF0590 family. As to quaternary structure, interacts (via FFAT-motif) with scs2 (via MSP domain); the interaction is direct and serves to restrict the localization of duc1 to areas of cell membrane-endoplasmic reticulum contact sites, and away from the cell division site.

It is found in the cell membrane. Promotes the proper distribution of phosphatidylinositol 4,5-bisphosphate (PtdIns(4,5)P2/PIP2) synthesis at the cell membrane. May bind phosphatidylinositol 4,5-bisphosphate (PtdIns(4,5)P2/PIP2) and is required for robust anchoring of the contractile ring to the cell membrane. The chain is DUF1769 family protein duc1 from Schizosaccharomyces pombe (strain 972 / ATCC 24843) (Fission yeast).